Consider the following 222-residue polypeptide: GTP cyclohydrolase 1 (222 aa).

Positions 111, 114, and 182 each coordinate Zn(2+).

It belongs to the GTP cyclohydrolase I family. As to quaternary structure, toroid-shaped homodecamer, composed of two pentamers of five dimers.

It carries out the reaction GTP + H2O = 7,8-dihydroneopterin 3'-triphosphate + formate + H(+). The protein operates within cofactor biosynthesis; 7,8-dihydroneopterin triphosphate biosynthesis; 7,8-dihydroneopterin triphosphate from GTP: step 1/1. The chain is GTP cyclohydrolase 1 from Klebsiella pneumoniae subsp. pneumoniae (strain ATCC 700721 / MGH 78578).